The primary structure comprises 1054 residues: Disks large-associated protein 2 (1054 aa).

2 disordered regions span residues 32–87 (EPEE…SGSR) and 242–301 (SHSL…SDDN). The span at 242–255 (SHSLEGSSKSNANG) shows a compositional bias: polar residues. The segment covering 267-281 (HAHHAKHSKRSKSKE) has biased composition (basic residues). The span at 289–299 (RPGMSSWWSSD) shows a compositional bias: low complexity. Phosphoserine is present on residues Ser-298, Ser-304, Ser-386, and Ser-452. Disordered stretches follow at residues 442–464 (GDEE…ILPE) and 609–666 (YKKT…TDSL). Polar residues predominate over residues 628–641 (VTAQSSTESTQDAY). A phosphoserine mark is found at Ser-662, Ser-665, Ser-668, and Ser-715. Residues 719–746 (QDSEFPEHQPYPRSDVETATDSDTESRG) are disordered. At Thr-738 the chain carries Phosphothreonine. Ser-740, Ser-771, Ser-806, Ser-978, and Ser-1007 each carry phosphoserine. 2 stretches are compositionally biased toward basic and acidic residues: residues 977 to 987 (ESPERKEERKV) and 1002 to 1020 (ITRE…EARR). The interval 977–1021 (ESPERKEERKVPPPIPKKPPKGKFPITREKSLDLPDRQRQEARRR) is disordered.

The protein belongs to the SAPAP family. As to quaternary structure, interacts with DLG1 and DLG4/PSD-95. In terms of tissue distribution, expressed in brain and kidney.

The protein resides in the cell membrane. It is found in the postsynaptic density. It localises to the synapse. May play a role in the molecular organization of synapses and neuronal cell signaling. Could be an adapter protein linking ion channel to the subsynaptic cytoskeleton. May induce enrichment of PSD-95/SAP90 at the plasma membrane. In Homo sapiens (Human), this protein is Disks large-associated protein 2.